Reading from the N-terminus, the 504-residue chain is uncharacterized protein (504 aa).

Residues 26–46 (ILFLLLGLIILVNISINVTTV) form a helical membrane-spanning segment. Over residues 103–112 (PTQCSSSSTH) the composition is skewed to polar residues. 3 disordered regions span residues 103–180 (PTQC…TRPM), 313–402 (YDAR…PLTT), and 431–504 (QRLA…GKLN). Positions 113-128 (YFRKHSNDRRSRRRYC) are enriched in basic residues. Over residues 135-147 (QIRQSNQQQSCHS) the composition is skewed to polar residues. Basic and acidic residues predominate over residues 313 to 324 (YDARDQWRRGTE). The span at 349–377 (SSQAHRQNFPSYTHSQPNHSPPQSVGYSS) shows a compositional bias: polar residues. Basic and acidic residues-rich tracts occupy residues 378 to 389 (RESHEVRRRAPD) and 467 to 478 (LELKRQVQENRG). Residues 494–504 (SLHRSRTGKLN) are compositionally biased toward basic residues.

The protein localises to the membrane. This is an uncharacterized protein from Rattus norvegicus (Rat).